Consider the following 831-residue polypeptide: Probable DNA-directed RNA polymerase (831 aa).

Catalysis depends on residues D490, K560, and D738.

It belongs to the phage and mitochondrial RNA polymerase family.

It localises to the mitochondrion. It carries out the reaction RNA(n) + a ribonucleoside 5'-triphosphate = RNA(n+1) + diphosphate. In terms of biological role, DNA-dependent RNA polymerase catalyzes the transcription of DNA into RNA using the four ribonucleoside triphosphates as substrates. This is Probable DNA-directed RNA polymerase from Gelasinospora sp. (strain G114).